A 1405-amino-acid chain; its full sequence is DNA-directed RNA polymerase subunit beta' (1405 aa).

Residues Cys70, Cys72, Cys85, and Cys88 each contribute to the Zn(2+) site. Asp458, Asp460, and Asp462 together coordinate Mg(2+). Positions 813, 887, 894, and 897 each coordinate Zn(2+).

The protein belongs to the RNA polymerase beta' chain family. In terms of assembly, the RNAP catalytic core consists of 2 alpha, 1 beta, 1 beta' and 1 omega subunit. When a sigma factor is associated with the core the holoenzyme is formed, which can initiate transcription. The cofactor is Mg(2+). Zn(2+) serves as cofactor.

The enzyme catalyses RNA(n) + a ribonucleoside 5'-triphosphate = RNA(n+1) + diphosphate. In terms of biological role, DNA-dependent RNA polymerase catalyzes the transcription of DNA into RNA using the four ribonucleoside triphosphates as substrates. The protein is DNA-directed RNA polymerase subunit beta' of Albidiferax ferrireducens (strain ATCC BAA-621 / DSM 15236 / T118) (Rhodoferax ferrireducens).